Reading from the N-terminus, the 103-residue chain is Large ribosomal subunit protein uL23 (103 aa).

The protein belongs to the universal ribosomal protein uL23 family. In terms of assembly, part of the 50S ribosomal subunit. Contacts protein L29, and trigger factor when it is bound to the ribosome.

Its function is as follows. One of the early assembly proteins it binds 23S rRNA. One of the proteins that surrounds the polypeptide exit tunnel on the outside of the ribosome. Forms the main docking site for trigger factor binding to the ribosome. The protein is Large ribosomal subunit protein uL23 of Prochlorococcus marinus (strain NATL1A).